The chain runs to 289 residues: MSSIDKKELEKFEKISHNWWNKDGEFGILHRINPIRLEYIIEKITTHYNRHLSKLTYREELVGNMQHSTAAYALVREDASSRLTHKLPLEAEFEKMSNDISKLEILDVGCGGGLIATPLAAQGFNVTAIDALQSNIETATAYAKENGVKINYLQSTIEELDSDKLYDVVICLEVIEHVENVQQFILNLVKHIKPNGMAIISTINRTKKAYILGIIVAEYILGWVPKNTHDYSKFLKPLEIYEMLTDTKIEIKELKGLVYDPAKNEWKLSDDIDVNYFMCLGRKSMCYPS.

Position 36 (R36) interacts with S-adenosyl-L-methionine. Positions 50–98 (RHLSKLTYREELVGNMQHSTAAYALVREDASSRLTHKLPLEAEFEKMSN) constitute an RPE1 insert domain. S-adenosyl-L-methionine is bound by residues G109, D130, and L172.

This sequence belongs to the methyltransferase superfamily. UbiG/COQ3 family.

It catalyses the reaction a 3-demethylubiquinol + S-adenosyl-L-methionine = a ubiquinol + S-adenosyl-L-homocysteine + H(+). The catalysed reaction is a 3-(all-trans-polyprenyl)benzene-1,2-diol + S-adenosyl-L-methionine = a 2-methoxy-6-(all-trans-polyprenyl)phenol + S-adenosyl-L-homocysteine + H(+). The protein operates within cofactor biosynthesis; ubiquinone biosynthesis. Its function is as follows. O-methyltransferase that catalyzes the 2 O-methylation steps in the ubiquinone biosynthetic pathway. The protein is Ubiquinone biosynthesis O-methyltransferase of Rickettsia conorii (strain ATCC VR-613 / Malish 7).